The sequence spans 266 residues: 3-methyl-2-oxobutanoate hydroxymethyltransferase 2 (266 aa).

The Mg(2+) site is built by aspartate 45 and aspartate 84. Residues 45-46 (DS), aspartate 84, and lysine 112 contribute to the 3-methyl-2-oxobutanoate site. Glutamate 114 contacts Mg(2+). Glutamate 181 acts as the Proton acceptor in catalysis.

Belongs to the PanB family. Homodecamer; pentamer of dimers. The cofactor is Mg(2+).

It is found in the cytoplasm. It catalyses the reaction 3-methyl-2-oxobutanoate + (6R)-5,10-methylene-5,6,7,8-tetrahydrofolate + H2O = 2-dehydropantoate + (6S)-5,6,7,8-tetrahydrofolate. It participates in cofactor biosynthesis; (R)-pantothenate biosynthesis; (R)-pantoate from 3-methyl-2-oxobutanoate: step 1/2. Functionally, catalyzes the reversible reaction in which hydroxymethyl group from 5,10-methylenetetrahydrofolate is transferred onto alpha-ketoisovalerate to form ketopantoate. In Pseudomonas aeruginosa (strain UCBPP-PA14), this protein is 3-methyl-2-oxobutanoate hydroxymethyltransferase 2.